Consider the following 98-residue polypeptide: MALTKIEIAENLVERCGLDKRIAKQFVEDFFEEIRRSLESGEEVKLSGFGNFTVRDKKARPGRNPKTGEDVAVSARRVVVFKAGQKLRERVENAKVKA.

It belongs to the bacterial histone-like protein family. As to quaternary structure, heterodimer of an alpha and a beta chain.

Its function is as follows. This protein is one of the two subunits of integration host factor, a specific DNA-binding protein that functions in genetic recombination as well as in transcriptional and translational control. The sequence is that of Integration host factor subunit alpha from Glaesserella parasuis serovar 5 (strain SH0165) (Haemophilus parasuis).